The following is a 66-amino-acid chain: MPKMKSKRAAKKRFSITASGKVKYKQMNKGHIMTKKSQKRVRRLKKSAILSEADSMKMRKQLLPYG.

The protein belongs to the bacterial ribosomal protein bL35 family.

The chain is Large ribosomal subunit protein bL35 from Treponema denticola (strain ATCC 35405 / DSM 14222 / CIP 103919 / JCM 8153 / KCTC 15104).